Here is a 187-residue protein sequence, read N- to C-terminus: Probable chorismate pyruvate-lyase (187 aa).

Substrate is bound by residues R81, L119, and E178.

This sequence belongs to the UbiC family.

It is found in the cytoplasm. It catalyses the reaction chorismate = 4-hydroxybenzoate + pyruvate. The protein operates within cofactor biosynthesis; ubiquinone biosynthesis. Functionally, removes the pyruvyl group from chorismate, with concomitant aromatization of the ring, to provide 4-hydroxybenzoate (4HB) for the ubiquinone pathway. This Thiobacillus denitrificans (strain ATCC 25259 / T1) protein is Probable chorismate pyruvate-lyase.